A 140-amino-acid polypeptide reads, in one-letter code: Austinoid biosynthesis clusters protein S (140 aa).

This sequence belongs to the trt14 isomerase family. In terms of assembly, homodimer.

It participates in secondary metabolite biosynthesis; terpenoid biosynthesis. Functionally, part of the gene cluster B that mediates the biosynthesis of austinol and dehydroaustinol, two fungal meroterpenoids. The first step of the pathway is the synthesis of 3,5-dimethylorsellinic acid by the polyketide synthase ausA. 3,5-dimethylorsellinic acid is then prenylated by the polyprenyl transferase ausN. Further epoxidation by the FAD-dependent monooxygenase ausM and cyclization by the probable terpene cyclase ausL lead to the formation of protoaustinoid A. Protoaustinoid A is then oxidized to spiro-lactone preaustinoid A3 by the combined action of the FAD-binding monooxygenases ausB and ausC, and the dioxygenase ausE. Acid-catalyzed keto-rearrangement and ring contraction of the tetraketide portion of preaustinoid A3 by ausJ lead to the formation of preaustinoid A4. The aldo-keto reductase ausK, with the help of ausH, is involved in the next step by transforming preaustinoid A4 into isoaustinone which is in turn hydroxylated by the P450 monooxygenase ausI to form austinolide. Finally, the cytochrome P450 monooxygenase ausG modifies austinolide to austinol. Austinol can be further modified to dehydroaustinol which forms a diffusible complex with diorcinol that initiates conidiation. Due to genetic rearrangements of the clusters and the subsequent loss of some enzymes, the end products of the Emericella nidulans austinoid biosynthesis clusters are austinol and dehydroaustinol, even if additional enzymes, such as the O-acetyltransferase ausQ and the cytochrome P450 monooxygenase ausR are still functional. AusS is necessary for austinoids production and may play a possible function as a regulator. This chain is Austinoid biosynthesis clusters protein S, found in Emericella nidulans (strain FGSC A4 / ATCC 38163 / CBS 112.46 / NRRL 194 / M139) (Aspergillus nidulans).